Reading from the N-terminus, the 266-residue chain is Gas vesicle protein L (266 aa).

This sequence belongs to the gas vesicle GvpF/GvpL family.

Its subcellular location is the gas vesicle. Functionally, might be involved in nucleating gas vesicle formation. A minor component of the gas vesicle. Gas vesicles are hollow, gas filled proteinaceous nanostructures found in some microorganisms. It is not clear what function gas vesicles perform in soil bacteria. The polypeptide is Gas vesicle protein L (Streptomyces sp. (strain CB03234)).